The sequence spans 314 residues: tRNA pseudouridine synthase B (314 aa).

Histidine 43 lines the substrate pocket. The Nucleophile role is filled by aspartate 48. Positions 76, 179, and 200 each coordinate substrate.

This sequence belongs to the pseudouridine synthase TruB family. Type 1 subfamily.

It carries out the reaction uridine(55) in tRNA = pseudouridine(55) in tRNA. In terms of biological role, responsible for synthesis of pseudouridine from uracil-55 in the psi GC loop of transfer RNAs. This chain is tRNA pseudouridine synthase B, found in Shigella dysenteriae serotype 1 (strain Sd197).